Here is a 398-residue protein sequence, read N- to C-terminus: Inositol polyphosphate 5-phosphatase (398 aa).

The protein belongs to the inositol 1,4,5-trisphosphate 5-phosphatase type II family. As to expression, expressed in tail, cilia, dendrites, axon and male head.

The protein resides in the cytoplasm. Dephosphorylates a number of phosphatidylinositols. Controls the cellular levels and subcellular distribution of phosphatidylinositol 3,5-bisphosphate and phosphatidylinositol 3,4,5-trisphosphate. Has a role in sperm activation and motility. Influences the localization of the transient receptor potential polycystin (TRPP) complex proteins lov-1 and pkd-2. This is Inositol polyphosphate 5-phosphatase from Caenorhabditis elegans.